The chain runs to 89 residues: Small ribosomal subunit protein uS15c (89 aa).

Belongs to the universal ribosomal protein uS15 family. Part of the 30S ribosomal subunit.

The protein localises to the plastid. The sequence is that of Small ribosomal subunit protein uS15c (rps15) from Aneura mirabilis (Parasitic liverwort).